Here is a 475-residue protein sequence, read N- to C-terminus: SAM50-like protein SPAC17C9.06 (475 aa).

The POTRA domain maps to 44 to 130 (VGISSIRVTG…LDVTIQVKEK (87 aa)).

This sequence belongs to the SAM50/omp85 family. As to quaternary structure, associates with the mitochondrial contact site and cristae organizing system (MICOS) complex (also known as MINOS or MitOS complex).

It localises to the mitochondrion outer membrane. Its function is as follows. May be required for the assembly pathway of mitochondrial outer membrane proteins. This Schizosaccharomyces pombe (strain 972 / ATCC 24843) (Fission yeast) protein is SAM50-like protein SPAC17C9.06.